Consider the following 138-residue polypeptide: Endonuclease V (138 aa).

Thr2 functions as the Nucleophile; via amide nitrogen in the catalytic mechanism. Catalysis depends on Glu23, which acts as the Proton acceptor.

In terms of assembly, monomer.

The enzyme catalyses Cleaves the N-glycosidic bond between the 5'-pyrimidine residue in cyclobutadipyrimidine (in DNA) and the corresponding deoxy-D-ribose residue.. The catalysed reaction is 2'-deoxyribonucleotide-(2'-deoxyribose 5'-phosphate)-2'-deoxyribonucleotide-DNA = a 3'-end 2'-deoxyribonucleotide-(2,3-dehydro-2,3-deoxyribose 5'-phosphate)-DNA + a 5'-end 5'-phospho-2'-deoxyribonucleoside-DNA + H(+). In terms of biological role, participates in the repair of UV-damaged DNA by excising pyrimidine dimers that are the major UV-lesions. DNA glycosylase activity hydrolyzes the glycosylic bond of the 5' pyrimidine of the dimer. This leaves apurinic/apyrimidic (AP) sites in the DNA. These AP sites are removed by the AP lyase activity which cleaves the intrapyrimidine phosphodiester bond. Catalysis proceeds via a protonated imine covalent intermediate between the alpha-amino group of the N-terminal threonine residue and the C1' of the deoxyribose sugar of the 5' pyrimidine at the dimer site. The sequence is that of Endonuclease V from Enterobacteria phage T4 (Bacteriophage T4).